We begin with the raw amino-acid sequence, 91 residues long: Elongation factor 1-beta (91 aa).

It belongs to the EF-1-beta/EF-1-delta family.

In terms of biological role, promotes the exchange of GDP for GTP in EF-1-alpha/GDP, thus allowing the regeneration of EF-1-alpha/GTP that could then be used to form the ternary complex EF-1-alpha/GTP/AAtRNA. In Metallosphaera sedula (strain ATCC 51363 / DSM 5348 / JCM 9185 / NBRC 15509 / TH2), this protein is Elongation factor 1-beta.